A 274-amino-acid polypeptide reads, in one-letter code: Hematopoietically-expressed homeobox protein hhex (274 aa).

Positions 139-198 (RKGGQVRFSNDQTIELEKKFETQKYLSPPERKRLAKMLQLSERQVKTWFQNRRAKWRRLK) form a DNA-binding region, homeobox. Residues 197-274 (LKQENPQGNK…GDKGFYNCAH (78 aa)) are disordered. Residues 237–248 (DEPTSSPTSQET) show a composition bias toward polar residues. The segment covering 249–263 (LDSEVSDDSDQEVDI) has biased composition (acidic residues).

As to expression, expressed in the most dorsoanterior endomesoderm of the blastula and gastrula embryo, and later is restricted to the forming liver diverticulum.

The protein localises to the nucleus. Functionally, recognizes the DNA sequence 5'-ATTAA-3'. Transcriptional repressor. Regulates the differentiation of both endothelial and blood cells. Probably plays a role in the proliferation of vascular endothelial cells during blood vessel development. Establishes anterior identity at two levels; acts early to enhance canonical wnt-signaling by repressing expression of tle4, and acts later to inhibit nodal-signaling by directly targeting nodal/nr1 and nodal2/nr2. May play a role in liver development. Induces heart development. The chain is Hematopoietically-expressed homeobox protein hhex from Xenopus tropicalis (Western clawed frog).